The following is a 500-amino-acid chain: Na(+)/H(+) antiporter NhaB (500 aa).

12 helical membrane passes run 28-50 (FLLSNPLLLWLAGPTVAAWVLVG), 68-88 (GGLLVLEALLLGLASPEALYA), 98-118 (LLLMFMVAGIYFMKDLLLLLF), 121-141 (LLLGVRSKTLLSLLFCLLAAL), 145-165 (FLDALTVTAVVISVAVAFFAV), 205-225 (LLMHAAVGTALGGVCTLVGEP), 244-264 (QVAPVSMPVLAAGLLTCVALE), 301-318 (ALLVQALAALVLMIGLAL), 350-370 (FQEALPFTALLVAFFAVVAVI), 394-414 (MLFIANGLLSAISDNVFVATI), 449-469 (VATPNGQAAFLFLLTSSIAPL), and 477-497 (MVWMALPYTLVMGGLGWWAVS).

This sequence belongs to the NhaB Na(+)/H(+) (TC 2.A.34) antiporter family.

It is found in the cell inner membrane. The enzyme catalyses 2 Na(+)(in) + 3 H(+)(out) = 2 Na(+)(out) + 3 H(+)(in). Functionally, na(+)/H(+) antiporter that extrudes sodium in exchange for external protons. The polypeptide is Na(+)/H(+) antiporter NhaB (Pseudomonas paraeruginosa (strain DSM 24068 / PA7) (Pseudomonas aeruginosa (strain PA7))).